Reading from the N-terminus, the 249-residue chain is Probable cobalt-factor III C(17)-methyltransferase (249 aa).

It belongs to the precorrin methyltransferase family.

It catalyses the reaction Co(II)-factor III + S-adenosyl-L-methionine + H(+) = Co(II)-factor IV + S-adenosyl-L-homocysteine. It functions in the pathway cofactor biosynthesis; adenosylcobalamin biosynthesis; cob(II)yrinate a,c-diamide from sirohydrochlorin (anaerobic route): step 3/10. Its function is as follows. Methyltransferase that likely catalyzes the ring contraction and methylation of C-17 in cobalt-factor III to form cobalt-factor IV. May also convert cobalt-precorrin-3 to cobalt-precorrin-4. The chain is Probable cobalt-factor III C(17)-methyltransferase (cbiH) from Methanocaldococcus jannaschii (strain ATCC 43067 / DSM 2661 / JAL-1 / JCM 10045 / NBRC 100440) (Methanococcus jannaschii).